The following is a 159-amino-acid chain: Ribosomal RNA large subunit methyltransferase H (159 aa).

S-adenosyl-L-methionine-binding positions include L76, G108, and F127–F132.

This sequence belongs to the RNA methyltransferase RlmH family. As to quaternary structure, homodimer.

The protein localises to the cytoplasm. The enzyme catalyses pseudouridine(1915) in 23S rRNA + S-adenosyl-L-methionine = N(3)-methylpseudouridine(1915) in 23S rRNA + S-adenosyl-L-homocysteine + H(+). Specifically methylates the pseudouridine at position 1915 (m3Psi1915) in 23S rRNA. This Bifidobacterium adolescentis (strain ATCC 15703 / DSM 20083 / NCTC 11814 / E194a) protein is Ribosomal RNA large subunit methyltransferase H.